Consider the following 218-residue polypeptide: Probable cutinase 3 (218 aa).

A signal peptide spans 1–17; sequence MSLRSVLVAALAALAVA. Cystine bridges form between cysteine 41-cysteine 120 and cysteine 67-cysteine 81. Serine 131 acts as the Nucleophile in catalysis. Residues cysteine 182 and cysteine 189 are joined by a disulfide bond. Aspartate 186 is a catalytic residue. Histidine 199 (proton donor/acceptor) is an active-site residue.

It belongs to the cutinase family.

It is found in the secreted. The catalysed reaction is cutin + H2O = cutin monomers.. Functionally, catalyzes the hydrolysis of complex carboxylic polyesters found in the cell wall of plants. Degrades cutin, a macromolecule that forms the structure of the plant cuticle. This Aspergillus terreus (strain NIH 2624 / FGSC A1156) protein is Probable cutinase 3.